We begin with the raw amino-acid sequence, 192 residues long: Adenylate kinase (192 aa).

12-17 provides a ligand contact to ATP; that stretch reads GSGKTT. Residues 34–63 are NMP; it reads STGDLLRAQVASGSELGKTIDSFISKGNLV. AMP is bound by residues T35, R40, 61–63, 88–91, and Q95; these read NLV and GYPR. Positions 130–136 are LID; sequence GRNRGAD. R131 is a binding site for ATP. Residues R133 and R145 each contribute to the AMP site. R173 lines the ATP pocket.

It belongs to the adenylate kinase family. Monomer.

The protein localises to the cytoplasm. It carries out the reaction AMP + ATP = 2 ADP. It functions in the pathway purine metabolism; AMP biosynthesis via salvage pathway; AMP from ADP: step 1/1. Functionally, catalyzes the reversible transfer of the terminal phosphate group between ATP and AMP. Plays an important role in cellular energy homeostasis and in adenine nucleotide metabolism. This Campylobacter jejuni subsp. doylei (strain ATCC BAA-1458 / RM4099 / 269.97) protein is Adenylate kinase.